A 200-amino-acid polypeptide reads, in one-letter code: MIGHLRGIIVEKQPPYLLLEVAGVGYEITAPLSTFYHLPEPQEEILLYTHLIVREDAHTLYGFHNDHERRLFRALIKVNGVGPKLALAILSGIGPDEFVHCVLNQNIDQLVRIPGVGRKTAERLVIETKDGLSRWHTNDTPSPEGLRSSNTQPTQDAISALMALGYKPQEAKRAIDAIQKPDLSAETLIRLALKQMVLGT.

Residues 1 to 64 (MIGHLRGIIV…EDAHTLYGFH (64 aa)) form a domain I region. Positions 65–143 (NDHERRLFRA…RWHTNDTPSP (79 aa)) are domain II. A disordered region spans residues 133-152 (SRWHTNDTPSPEGLRSSNTQ). Positions 144–148 (EGLRS) are flexible linker. The segment at 149 to 200 (SNTQPTQDAISALMALGYKPQEAKRAIDAIQKPDLSAETLIRLALKQMVLGT) is domain III.

This sequence belongs to the RuvA family. As to quaternary structure, homotetramer. Forms an RuvA(8)-RuvB(12)-Holliday junction (HJ) complex. HJ DNA is sandwiched between 2 RuvA tetramers; dsDNA enters through RuvA and exits via RuvB. An RuvB hexamer assembles on each DNA strand where it exits the tetramer. Each RuvB hexamer is contacted by two RuvA subunits (via domain III) on 2 adjacent RuvB subunits; this complex drives branch migration. In the full resolvosome a probable DNA-RuvA(4)-RuvB(12)-RuvC(2) complex forms which resolves the HJ.

Its subcellular location is the cytoplasm. The RuvA-RuvB-RuvC complex processes Holliday junction (HJ) DNA during genetic recombination and DNA repair, while the RuvA-RuvB complex plays an important role in the rescue of blocked DNA replication forks via replication fork reversal (RFR). RuvA specifically binds to HJ cruciform DNA, conferring on it an open structure. The RuvB hexamer acts as an ATP-dependent pump, pulling dsDNA into and through the RuvAB complex. HJ branch migration allows RuvC to scan DNA until it finds its consensus sequence, where it cleaves and resolves the cruciform DNA. In Coxiella burnetii (strain CbuK_Q154) (Coxiella burnetii (strain Q154)), this protein is Holliday junction branch migration complex subunit RuvA.